The primary structure comprises 692 residues: Elongation factor G (692 aa).

The tr-type G domain maps to 8–282 (PNTRNIGIMA…NVVAYLPSPV (275 aa)). Residues 17-24 (AHIDAGKT), 81-85 (DTPGH), and 135-138 (NKMD) each bind GTP.

Belongs to the TRAFAC class translation factor GTPase superfamily. Classic translation factor GTPase family. EF-G/EF-2 subfamily.

Its subcellular location is the cytoplasm. Its function is as follows. Catalyzes the GTP-dependent ribosomal translocation step during translation elongation. During this step, the ribosome changes from the pre-translocational (PRE) to the post-translocational (POST) state as the newly formed A-site-bound peptidyl-tRNA and P-site-bound deacylated tRNA move to the P and E sites, respectively. Catalyzes the coordinated movement of the two tRNA molecules, the mRNA and conformational changes in the ribosome. In Brevibacillus brevis (strain 47 / JCM 6285 / NBRC 100599), this protein is Elongation factor G.